The chain runs to 311 residues: Malate dehydrogenase (311 aa).

NAD(+) contacts are provided by residues 7-13 and Asp34; that span reads GAAGGIG. Substrate-binding residues include Arg81 and Arg87. NAD(+) contacts are provided by residues Asn94 and 117 to 119; that span reads ITN. 2 residues coordinate substrate: Asn119 and Arg153. His177 functions as the Proton acceptor in the catalytic mechanism. Met227 provides a ligand contact to NAD(+).

Belongs to the LDH/MDH superfamily. MDH type 1 family. Homodimer.

It carries out the reaction (S)-malate + NAD(+) = oxaloacetate + NADH + H(+). Catalyzes the reversible oxidation of malate to oxaloacetate. This Shewanella frigidimarina (strain NCIMB 400) protein is Malate dehydrogenase.